A 286-amino-acid chain; its full sequence is Lipoyl synthase (286 aa).

Positions 34, 39, 45, 60, 64, 67, and 271 each coordinate [4Fe-4S] cluster. The 215-residue stretch at Trp-46–Ser-260 folds into the Radical SAM core domain.

Belongs to the radical SAM superfamily. Lipoyl synthase family. The cofactor is [4Fe-4S] cluster.

Its subcellular location is the cytoplasm. The catalysed reaction is [[Fe-S] cluster scaffold protein carrying a second [4Fe-4S](2+) cluster] + N(6)-octanoyl-L-lysyl-[protein] + 2 oxidized [2Fe-2S]-[ferredoxin] + 2 S-adenosyl-L-methionine + 4 H(+) = [[Fe-S] cluster scaffold protein] + N(6)-[(R)-dihydrolipoyl]-L-lysyl-[protein] + 4 Fe(3+) + 2 hydrogen sulfide + 2 5'-deoxyadenosine + 2 L-methionine + 2 reduced [2Fe-2S]-[ferredoxin]. It participates in protein modification; protein lipoylation via endogenous pathway; protein N(6)-(lipoyl)lysine from octanoyl-[acyl-carrier-protein]: step 2/2. Catalyzes the radical-mediated insertion of two sulfur atoms into the C-6 and C-8 positions of the octanoyl moiety bound to the lipoyl domains of lipoate-dependent enzymes, thereby converting the octanoylated domains into lipoylated derivatives. This is Lipoyl synthase from Picrophilus torridus (strain ATCC 700027 / DSM 9790 / JCM 10055 / NBRC 100828 / KAW 2/3).